A 419-amino-acid chain; its full sequence is MSLLAMGKAAREASFELAVAATARKNQALLAMAEELELQQDVILAANAKDIEAGRSSGLTDAMLDRLLLNESRLAGIVADVRKVVTLDDPVGSEIDSRVLENGMRLSRRRVPIGVIGVIYEARPNVTIDIAALCLKTGNASILRGGRETFNSNMALVKVIQAALAKTGLPAASVQYIESPDRALVSELLTMDQYVDMIIPRGGANLHRLCKDQSTIPVIIGGFGVSHLYVDESADLIRAIDVIDNAKVQRPSACNSLDTLLLNEKIAAEIVPALVARMNQQKVTLVAEPKAFALLQAAGAEQLRAAGAEDFDTEWLSLTLGVKVVADVKAAIAHLQEHNACHSDAILTNDLKCAEYFINAAGSAAVYVNASTRFTDGAQFGLGAEVAVSTQKLHARGPMGLTELTSYKWIGQADYLSRS.

Belongs to the gamma-glutamyl phosphate reductase family.

It is found in the cytoplasm. It catalyses the reaction L-glutamate 5-semialdehyde + phosphate + NADP(+) = L-glutamyl 5-phosphate + NADPH + H(+). It functions in the pathway amino-acid biosynthesis; L-proline biosynthesis; L-glutamate 5-semialdehyde from L-glutamate: step 2/2. Catalyzes the NADPH-dependent reduction of L-glutamate 5-phosphate into L-glutamate 5-semialdehyde and phosphate. The product spontaneously undergoes cyclization to form 1-pyrroline-5-carboxylate. This chain is Gamma-glutamyl phosphate reductase, found in Tolumonas auensis (strain DSM 9187 / NBRC 110442 / TA 4).